Consider the following 419-residue polypeptide: Sulfate adenylyltransferase (419 aa).

The protein belongs to the sulfate adenylyltransferase family.

The enzyme catalyses sulfate + ATP + H(+) = adenosine 5'-phosphosulfate + diphosphate. Its pathway is sulfur metabolism; hydrogen sulfide biosynthesis; sulfite from sulfate: step 1/3. The sequence is that of Sulfate adenylyltransferase from Psychrobacter sp. (strain PRwf-1).